The sequence spans 368 residues: F-box only protein 28 (368 aa).

Positions 1 to 11 (MAAAAEERMAE) are enriched in basic and acidic residues. A disordered region spans residues 1-56 (MAAAAEERMAEEGGGGQGDGGSSLASGSTQRQPPPPAPQHPQPGSQALPAPALAPD). Gly residues predominate over residues 12–21 (EGGGGQGDGG). A compositionally biased stretch (low complexity) spans 22-31 (SSLASGSTQR). Residues 32 to 41 (QPPPPAPQHP) are compositionally biased toward pro residues. A compositionally biased stretch (low complexity) spans 42 to 56 (QPGSQALPAPALAPD). The region spanning 61 to 109 (NNTLVALPIVAIENILSFMSYDEISQLRLVCKRMDLVCQRMLNQGFLKV) is the F-box domain. Serine 235 and serine 242 each carry phosphoserine. Position 270 is a phosphothreonine (threonine 270). The segment at 328-368 (MESAVGNSSGSGQNEESPRKRKKATEAIDSLRKSKRLRNRK) is disordered. Residues 333 to 342 (GNSSGSGQNE) are compositionally biased toward low complexity. Serine 344 bears the Phosphoserine mark.

In terms of assembly, part of a SCF (SKP1-cullin-F-box) protein ligase complex.

Its subcellular location is the chromosome. It is found in the centromere. It localises to the kinetochore. Its function is as follows. Probably recognizes and binds to some phosphorylated proteins and promotes their ubiquitination and degradation. This is F-box only protein 28 (FBXO28) from Homo sapiens (Human).